Consider the following 34-residue polypeptide: MSDINTARLPYVVFMSFIPPCVNDDIQVVLTRGE.

A propeptide spanning residues Met-1 to Pro-10 is cleaved from the precursor. The cyclopeptide (Tyr-Pro) cross-link spans Tyr-11 to Pro-20. The propeptide occupies Cys-21 to Glu-34.

It belongs to the MSDIN fungal toxin family. Post-translationally, processed by the macrocyclase-peptidase enzyme POPB to yield a toxic cyclic decapeptide. POPB first removes 10 residues from the N-terminus. Conformational trapping of the remaining peptide forces the enzyme to release this intermediate rather than proceed to macrocyclization. The enzyme rebinds the remaining peptide in a different conformation and catalyzes macrocyclization of the N-terminal 10 residues.

In terms of biological role, probable toxin that belongs to the MSDIN-like toxin family responsible for a large number of food poisoning cases and deaths. This chain is MSDIN-like toxin proprotein 5, found in Amanita bisporigera (Destroying angel).